Here is a 211-residue protein sequence, read N- to C-terminus: Protein-methionine-sulfoxide reductase heme-binding subunit MsrQ (211 aa).

The next 4 helical transmembrane spans lie at 10–30 (WLKV…VWAI), 82–102 (LWCF…ELGV), 116–136 (PYLT…FTST), and 153–173 (FVYL…KIIS).

This sequence belongs to the MsrQ family. In terms of assembly, heterodimer of a catalytic subunit (MsrP) and a heme-binding subunit (MsrQ). The cofactor is FMN. Requires heme b as cofactor.

The protein resides in the cell inner membrane. Functionally, part of the MsrPQ system that repairs oxidized periplasmic proteins containing methionine sulfoxide residues (Met-O), using respiratory chain electrons. Thus protects these proteins from oxidative-stress damage caused by reactive species of oxygen and chlorine generated by the host defense mechanisms. MsrPQ is essential for the maintenance of envelope integrity under bleach stress, rescuing a wide series of structurally unrelated periplasmic proteins from methionine oxidation, including the primary periplasmic chaperone SurA and the lipoprotein Pal. MsrQ provides electrons for reduction to the reductase catalytic subunit MsrP, using the quinone pool of the respiratory chain. This chain is Protein-methionine-sulfoxide reductase heme-binding subunit MsrQ, found in Shigella dysenteriae serotype 1 (strain Sd197).